A 93-amino-acid chain; its full sequence is MAGPNGDPHVLGGGTGDEGDEGGDTFEEEEYAAINSMLDQINSCLDHLEEKNDHLHICLKELLESNRQTRLEFQQQSKQLNTGADVQGSQPPA.

2 disordered regions span residues 1–26 (MAGP…GDTF) and 74–93 (QQQS…QPPA). Acidic residues predominate over residues 17 to 26 (DEGDEGGDTF). Residues 59 to 80 (LKELLESNRQTRLEFQQQSKQL) are a coiled coil.

It belongs to the UPF0184 (EST00098) family.

The protein localises to the cell junction. Its subcellular location is the cytoplasm. It localises to the cytoskeleton. Functionally, essential for intermediate filament organization in intestinal cells, interacts with intermediate filament and regulates intestinal lumen morphology. This is Bublin coiled-coil protein (BBLN) from Taeniopygia guttata (Zebra finch).